The primary structure comprises 182 residues: Methionine-R-sulfoxide reductase B2, mitochondrial (182 aa).

Residues M1 to A20 constitute a mitochondrion transit peptide. In terms of domain architecture, MsrB spans K51 to R180. 4 residues coordinate Zn(2+): C90, C93, C146, and C149. The active-site Nucleophile is C169.

It belongs to the MsrB Met sulfoxide reductase family. Interacts with DAOA; the interaction is direct. The cofactor is Zn(2+). Ubiquitous. Detected in retina, ocular ciliary body, skeletal muscle, heart, colon, bone marrow, cerebellum, small intestine, fetal brain, fetal liver, kidney, spinal cord, lung, placenta and prostate.

It localises to the mitochondrion. The enzyme catalyses L-methionyl-[protein] + [thioredoxin]-disulfide + H2O = L-methionyl-(R)-S-oxide-[protein] + [thioredoxin]-dithiol. The catalysed reaction is [thioredoxin]-disulfide + L-methionine + H2O = L-methionine (R)-S-oxide + [thioredoxin]-dithiol. Methionine-sulfoxide reductase that specifically reduces methionine (R)-sulfoxide back to methionine. While in many cases, methionine oxidation is the result of random oxidation following oxidative stress, methionine oxidation is also a post-translational modification that takes place on specific residue. Upon oxidative stress, may play a role in the preservation of mitochondrial integrity by decreasing the intracellular reactive oxygen species build-up through its scavenging role, hence contributing to cell survival and protein maintenance. The protein is Methionine-R-sulfoxide reductase B2, mitochondrial (MSRB2) of Homo sapiens (Human).